The chain runs to 241 residues: Microneme antigen (241 aa).

Positions 1-34 (MRLPIRFPKYVLYGMASAVWSILFLHILVGDTMS) are cleaved as a signal peptide. Positions 35–103 (AADALSWSGG…ATGRGPSFVH (69 aa)) are excised as a propeptide. The span at 61–83 (HEMGKELEQQHGAEEQQMQRDTK) shows a compositional bias: basic and acidic residues. A disordered region spans residues 61–92 (HEMGKELEQQHGAEEQQMQRDTKPAAFSNPPH). PAN domains are found at residues 112–181 (CFPH…PRSC) and 185–241 (CTDN…FNKS). Cystine bridges form between C112–C181, C137–C159, C141–C147, C185–C189, C210–C230, and C214–C220. S121 contributes to the a carbohydrate binding site. A carbohydrate-binding residues include K162, Y169, and D174.

It belongs to the microneme antigen family. In terms of assembly, homodimer or heterodimer of major microneme antigen and microneme antigen. Post-translationally, contains six disulfide bonds.

It localises to the cytoplasmic vesicle. The protein localises to the secretory vesicle. It is found in the microneme. Its function is as follows. Galactose-binding lectin. Plays a role in adhesion to the host cell. Has a potential role in invasion of host cells. The sequence is that of Microneme antigen from Sarcocystis muris.